A 1131-amino-acid polypeptide reads, in one-letter code: Tyrosine-protein kinase JAK2 (1131 aa).

Positions 1 to 239 are interaction with cytokine/interferon/growth hormone receptors; it reads MGMACLTMTE…RYRFRRFIEQ (239 aa). An FERM domain is found at 37–380; the sequence is PVLQVYLYHS…GYYRLTADAH (344 aa). The residue at position 119 (tyrosine 119) is a Phosphotyrosine; by autocatalysis. 2 positions are modified to phosphotyrosine: tyrosine 372 and tyrosine 373. An SH2; atypical domain is found at 401–482; the sequence is HGPISMDFAI…NLKDLLNCYQ (82 aa). Position 523 is a phosphoserine (serine 523). In terms of domain architecture, Protein kinase 1 spans 545 to 809; it reads LIFNESLGQG…AIIRDLNSLF (265 aa). Phosphotyrosine occurs at positions 570 and 813. One can recognise a Protein kinase 2 domain in the interval 849–1126; it reads LKFLQQLGKG…RDLALRVDQI (278 aa). Residue 855–863 participates in ATP binding; sequence LGKGNFGSV. Residue tyrosine 868 is modified to Phosphotyrosine; by autocatalysis. Lysine 882 contributes to the ATP binding site. 2 positions are modified to phosphotyrosine; by autocatalysis: tyrosine 966 and tyrosine 972. The active-site Proton acceptor is aspartate 976. Residues tyrosine 1007 and tyrosine 1008 each carry the phosphotyrosine; by autocatalysis modification.

It belongs to the protein kinase superfamily. Tyr protein kinase family. JAK subfamily. In terms of assembly, interacts with IL23R, SKB1 and STAM2. Interacts with EPOR. Interacts with LYN. Interacts with SIRPA. Interacts with SH2B1. Interacts with TEC. Interacts with IFNGR2 (via intracellular domain). Interacts with LEPR (Isoform B). Interacts with HSP90AB1; promotes functional activation in a heat shock-dependent manner. Interacts with STRA6. Interacts with ASB2; the interaction targets JAK2 for Notch-induced proteasomal degradation. The cofactor is Mg(2+). Post-translationally, autophosphorylated, leading to regulate its activity. Leptin promotes phosphorylation on tyrosine residues, including phosphorylation on Tyr-813. Autophosphorylation on Tyr-119 in response to EPO down-regulates its kinase activity. Autophosphorylation on Tyr-868, Tyr-966 and Tyr-972 in response to growth hormone (GH) are required for maximal kinase activity. Also phosphorylated by TEC. Phosphorylated on tyrosine residues in response to interferon gamma signaling. Phosphorylated on tyrosine residues in response to a signaling cascade that is activated by increased cellular retinol. In terms of processing, undergoes Notch-induced ubiquitination and subsequent proteasomal degradation which is mediated by ASB1 or ASB2, the substrate-recognition components of probable ECS E3 ubiquitin-protein ligase complexes.

The protein localises to the endomembrane system. The protein resides in the cytoplasm. It is found in the nucleus. The enzyme catalyses L-tyrosyl-[protein] + ATP = O-phospho-L-tyrosyl-[protein] + ADP + H(+). Regulated by autophosphorylation, can both activate or decrease activity. Heme regulates its activity by enhancing the phosphorylation on Tyr-1007 and Tyr-1008. Non-receptor tyrosine kinase involved in various processes such as cell growth, development, differentiation or histone modifications. Mediates essential signaling events in both innate and adaptive immunity. In the cytoplasm, plays a pivotal role in signal transduction via its association with type I receptors such as growth hormone (GHR), prolactin (PRLR), leptin (LEPR), erythropoietin (EPOR), thrombopoietin (THPO); or type II receptors including IFN-alpha, IFN-beta, IFN-gamma and multiple interleukins. Following ligand-binding to cell surface receptors, phosphorylates specific tyrosine residues on the cytoplasmic tails of the receptor, creating docking sites for STATs proteins. Subsequently, phosphorylates the STATs proteins once they are recruited to the receptor. Phosphorylated STATs then form homodimer or heterodimers and translocate to the nucleus to activate gene transcription. For example, cell stimulation with erythropoietin (EPO) during erythropoiesis leads to JAK2 autophosphorylation, activation, and its association with erythropoietin receptor (EPOR) that becomes phosphorylated in its cytoplasmic domain. Then, STAT5 (STAT5A or STAT5B) is recruited, phosphorylated and activated by JAK2. Once activated, dimerized STAT5 translocates into the nucleus and promotes the transcription of several essential genes involved in the modulation of erythropoiesis. Part of a signaling cascade that is activated by increased cellular retinol and that leads to the activation of STAT5 (STAT5A or STAT5B). In addition, JAK2 mediates angiotensin-2-induced ARHGEF1 phosphorylation. Plays a role in cell cycle by phosphorylating CDKN1B. Cooperates with TEC through reciprocal phosphorylation to mediate cytokine-driven activation of FOS transcription. In the nucleus, plays a key role in chromatin by specifically mediating phosphorylation of 'Tyr-41' of histone H3 (H3Y41ph), a specific tag that promotes exclusion of CBX5 (HP1 alpha) from chromatin. Up-regulates the potassium voltage-gated channel activity of KCNA3. This is Tyrosine-protein kinase JAK2 from Sus scrofa (Pig).